Here is a 310-residue protein sequence, read N- to C-terminus: tRNA-cytidine(32) 2-sulfurtransferase (310 aa).

The PP-loop motif motif lies at 47–52 (SGGKDS). The [4Fe-4S] cluster site is built by Cys122, Cys125, and Cys213.

The protein belongs to the TtcA family. As to quaternary structure, homodimer. Mg(2+) is required as a cofactor. The cofactor is [4Fe-4S] cluster.

The protein localises to the cytoplasm. It catalyses the reaction cytidine(32) in tRNA + S-sulfanyl-L-cysteinyl-[cysteine desulfurase] + AH2 + ATP = 2-thiocytidine(32) in tRNA + L-cysteinyl-[cysteine desulfurase] + A + AMP + diphosphate + H(+). It functions in the pathway tRNA modification. Catalyzes the ATP-dependent 2-thiolation of cytidine in position 32 of tRNA, to form 2-thiocytidine (s(2)C32). The sulfur atoms are provided by the cysteine/cysteine desulfurase (IscS) system. The chain is tRNA-cytidine(32) 2-sulfurtransferase from Haemophilus influenzae (strain 86-028NP).